A 234-amino-acid polypeptide reads, in one-letter code: Large ribosomal subunit protein uL1 (234 aa).

Belongs to the universal ribosomal protein uL1 family. In terms of assembly, part of the 50S ribosomal subunit.

In terms of biological role, binds directly to 23S rRNA. The L1 stalk is quite mobile in the ribosome, and is involved in E site tRNA release. Protein L1 is also a translational repressor protein, it controls the translation of the L11 operon by binding to its mRNA. The polypeptide is Large ribosomal subunit protein uL1 (Cronobacter sakazakii (strain ATCC BAA-894) (Enterobacter sakazakii)).